We begin with the raw amino-acid sequence, 249 residues long: 3-deoxy-manno-octulosonate cytidylyltransferase (249 aa).

Belongs to the KdsB family.

The protein resides in the cytoplasm. It carries out the reaction 3-deoxy-alpha-D-manno-oct-2-ulosonate + CTP = CMP-3-deoxy-beta-D-manno-octulosonate + diphosphate. It participates in nucleotide-sugar biosynthesis; CMP-3-deoxy-D-manno-octulosonate biosynthesis; CMP-3-deoxy-D-manno-octulosonate from 3-deoxy-D-manno-octulosonate and CTP: step 1/1. It functions in the pathway bacterial outer membrane biogenesis; lipopolysaccharide biosynthesis. In terms of biological role, activates KDO (a required 8-carbon sugar) for incorporation into bacterial lipopolysaccharide in Gram-negative bacteria. The polypeptide is 3-deoxy-manno-octulosonate cytidylyltransferase (Aliivibrio salmonicida (strain LFI1238) (Vibrio salmonicida (strain LFI1238))).